A 160-amino-acid polypeptide reads, in one-letter code: Phosphopantetheine adenylyltransferase (160 aa).

Ser8 lines the substrate pocket. Residues 8-9 (SF) and His16 each bind ATP. Residues Lys40, Thr72, and Arg86 each contribute to the substrate site. Residues 87 to 89 (GLR), Glu97, and 122 to 128 (YSFLSSS) contribute to the ATP site.

The protein belongs to the bacterial CoaD family. As to quaternary structure, homohexamer. Mg(2+) is required as a cofactor.

Its subcellular location is the cytoplasm. It carries out the reaction (R)-4'-phosphopantetheine + ATP + H(+) = 3'-dephospho-CoA + diphosphate. It participates in cofactor biosynthesis; coenzyme A biosynthesis; CoA from (R)-pantothenate: step 4/5. In terms of biological role, reversibly transfers an adenylyl group from ATP to 4'-phosphopantetheine, yielding dephospho-CoA (dPCoA) and pyrophosphate. This is Phosphopantetheine adenylyltransferase from Synechococcus sp. (strain CC9311).